The primary structure comprises 205 residues: Ribosome maturation factor RimP (205 aa).

This sequence belongs to the RimP family.

The protein localises to the cytoplasm. Its function is as follows. Required for maturation of 30S ribosomal subunits. This is Ribosome maturation factor RimP from Sinorhizobium fredii (strain NBRC 101917 / NGR234).